A 117-amino-acid polypeptide reads, in one-letter code: Huntingtin-interacting protein M (117 aa).

2 stretches are compositionally biased toward basic and acidic residues: residues 1–11 (MSEKKSQEKPC) and 83–97 (QDRERQRDNDREPSR). Disordered stretches follow at residues 1–25 (MSEKKSQEKPCSDNNQIEDPSSRPE) and 74–117 (NINN…RRNG).

In terms of assembly, may interact with the N-terminus of HD.

The polypeptide is Huntingtin-interacting protein M (Mus musculus (Mouse)).